A 303-amino-acid chain; its full sequence is Diaminopimelate epimerase (303 aa).

Positions 15, 47, and 67 each coordinate substrate. Catalysis depends on Cys76, which acts as the Proton donor. Substrate is bound by residues Gly77–Asn78, Asn163, Asn197, and Glu215–Arg216. Cys224 functions as the Proton acceptor in the catalytic mechanism. Gly225–Ser226 lines the substrate pocket. The disordered stretch occupies residues Phe278 to Ala303.

It belongs to the diaminopimelate epimerase family. Homodimer.

Its subcellular location is the cytoplasm. It carries out the reaction (2S,6S)-2,6-diaminopimelate = meso-2,6-diaminopimelate. It functions in the pathway amino-acid biosynthesis; L-lysine biosynthesis via DAP pathway; DL-2,6-diaminopimelate from LL-2,6-diaminopimelate: step 1/1. Its function is as follows. Catalyzes the stereoinversion of LL-2,6-diaminopimelate (L,L-DAP) to meso-diaminopimelate (meso-DAP), a precursor of L-lysine and an essential component of the bacterial peptidoglycan. The chain is Diaminopimelate epimerase from Brucella abortus (strain S19).